The following is a 370-amino-acid chain: 3-isopropylmalate dehydrogenase (370 aa).

77–90 (GAKWDGVPYEARPE) contacts NAD(+). Substrate contacts are provided by Arg-97, Arg-107, Arg-135, and Asp-226. Asp-226, Asp-250, and Asp-254 together coordinate Mg(2+). 290-302 (GSAPDIAGKGLAN) contacts NAD(+).

It belongs to the isocitrate and isopropylmalate dehydrogenases family. LeuB type 1 subfamily. Homodimer. Mg(2+) is required as a cofactor. Requires Mn(2+) as cofactor.

The protein localises to the cytoplasm. It catalyses the reaction (2R,3S)-3-isopropylmalate + NAD(+) = 4-methyl-2-oxopentanoate + CO2 + NADH. The protein operates within amino-acid biosynthesis; L-leucine biosynthesis; L-leucine from 3-methyl-2-oxobutanoate: step 3/4. In terms of biological role, catalyzes the oxidation of 3-carboxy-2-hydroxy-4-methylpentanoate (3-isopropylmalate) to 3-carboxy-4-methyl-2-oxopentanoate. The product decarboxylates to 4-methyl-2 oxopentanoate. The protein is 3-isopropylmalate dehydrogenase of Rhodopseudomonas palustris (strain BisB18).